A 126-amino-acid chain; its full sequence is Small ribosomal subunit protein uS13 (126 aa).

Residues 95 to 126 (GLPVRGQQTRTNARTRKGKRKTVGGTKKAKAK) are disordered. The segment covering 107 to 126 (ARTRKGKRKTVGGTKKAKAK) has biased composition (basic residues).

It belongs to the universal ribosomal protein uS13 family. Part of the 30S ribosomal subunit. Forms a loose heterodimer with protein S19. Forms two bridges to the 50S subunit in the 70S ribosome.

Functionally, located at the top of the head of the 30S subunit, it contacts several helices of the 16S rRNA. In the 70S ribosome it contacts the 23S rRNA (bridge B1a) and protein L5 of the 50S subunit (bridge B1b), connecting the 2 subunits; these bridges are implicated in subunit movement. Contacts the tRNAs in the A and P-sites. The polypeptide is Small ribosomal subunit protein uS13 (Aquifex aeolicus (strain VF5)).